Here is a 282-residue protein sequence, read N- to C-terminus: Elongation factor Ts (282 aa).

Residues 80–83 are involved in Mg(2+) ion dislocation from EF-Tu; it reads TDFV.

Belongs to the EF-Ts family.

It is found in the cytoplasm. Functionally, associates with the EF-Tu.GDP complex and induces the exchange of GDP to GTP. It remains bound to the aminoacyl-tRNA.EF-Tu.GTP complex up to the GTP hydrolysis stage on the ribosome. In Pasteurella multocida (strain Pm70), this protein is Elongation factor Ts (tsf).